Consider the following 275-residue polypeptide: 2,3,4,5-tetrahydropyridine-2,6-dicarboxylate N-succinyltransferase (275 aa).

Positions 108 and 145 each coordinate substrate.

It belongs to the transferase hexapeptide repeat family. In terms of assembly, homotrimer.

The protein localises to the cytoplasm. It carries out the reaction (S)-2,3,4,5-tetrahydrodipicolinate + succinyl-CoA + H2O = (S)-2-succinylamino-6-oxoheptanedioate + CoA. It functions in the pathway amino-acid biosynthesis; L-lysine biosynthesis via DAP pathway; LL-2,6-diaminopimelate from (S)-tetrahydrodipicolinate (succinylase route): step 1/3. This chain is 2,3,4,5-tetrahydropyridine-2,6-dicarboxylate N-succinyltransferase, found in Ruegeria pomeroyi (strain ATCC 700808 / DSM 15171 / DSS-3) (Silicibacter pomeroyi).